Consider the following 319-residue polypeptide: Probable carboxylesterase 5 (319 aa).

An N-acetylmethionine modification is found at M1. Residues 79 to 81 (HGG) carry the Involved in the stabilization of the negatively charged intermediate by the formation of the oxyanion hole motif. Residues S163, D262, and H294 contribute to the active site.

Belongs to the 'GDXG' lipolytic enzyme family. Expressed in roots, leaves, stems, flowers and siliques.

The enzyme catalyses a carboxylic ester + H2O = an alcohol + a carboxylate + H(+). Its function is as follows. Carboxylesterase acting on esters with varying acyl chain length. The protein is Probable carboxylesterase 5 (CXE5) of Arabidopsis thaliana (Mouse-ear cress).